The sequence spans 678 residues: Penicillin-binding protein activator LpoA (678 aa).

An N-terminal signal peptide occupies residues 1-26 (MVPSTFSRLKAARCLPVVLAALIFAG). Residue C27 is the site of N-palmitoyl cysteine attachment. A lipid anchor (S-diacylglycerol cysteine) is attached at C27. Disordered regions lie at residues 304–338 (AEQPQPQTVDGVASPAQASVSDLTGEQPAAQSVPV) and 495–530 (IALTGSPITPRETTDSGMTTNNPTLQTTPTDDQFTN). The span at 513–529 (TTNNPTLQTTPTDDQFT) shows a compositional bias: low complexity.

It belongs to the LpoA family. Interacts with PBP1a.

Its subcellular location is the cell outer membrane. Regulator of peptidoglycan synthesis that is essential for the function of penicillin-binding protein 1A (PBP1a). In Escherichia coli O6:H1 (strain CFT073 / ATCC 700928 / UPEC), this protein is Penicillin-binding protein activator LpoA.